The chain runs to 302 residues: tRNA-cytidine(32) 2-sulfurtransferase (302 aa).

Residues 57–62 carry the PP-loop motif motif; sequence SGGKDS. Residues Cys132, Cys135, and Cys223 each coordinate [4Fe-4S] cluster.

It belongs to the TtcA family. Homodimer. Mg(2+) is required as a cofactor. Requires [4Fe-4S] cluster as cofactor.

The protein resides in the cytoplasm. It catalyses the reaction cytidine(32) in tRNA + S-sulfanyl-L-cysteinyl-[cysteine desulfurase] + AH2 + ATP = 2-thiocytidine(32) in tRNA + L-cysteinyl-[cysteine desulfurase] + A + AMP + diphosphate + H(+). It functions in the pathway tRNA modification. Catalyzes the ATP-dependent 2-thiolation of cytidine in position 32 of tRNA, to form 2-thiocytidine (s(2)C32). The sulfur atoms are provided by the cysteine/cysteine desulfurase (IscS) system. The sequence is that of tRNA-cytidine(32) 2-sulfurtransferase from Marinobacter nauticus (strain ATCC 700491 / DSM 11845 / VT8) (Marinobacter aquaeolei).